Consider the following 474-residue polypeptide: Phenylalanine--tRNA ligase alpha subunit (474 aa).

Residues T317, 356–358 (QLE), and Y396 each bind L-phenylalanine. E398 provides a ligand contact to Mg(2+). F421 is an L-phenylalanine binding site.

This sequence belongs to the class-II aminoacyl-tRNA synthetase family. Phe-tRNA synthetase alpha subunit type 2 subfamily. Tetramer of two alpha and two beta subunits. Mg(2+) serves as cofactor.

It localises to the cytoplasm. The catalysed reaction is tRNA(Phe) + L-phenylalanine + ATP = L-phenylalanyl-tRNA(Phe) + AMP + diphosphate + H(+). The chain is Phenylalanine--tRNA ligase alpha subunit from Archaeoglobus fulgidus (strain ATCC 49558 / DSM 4304 / JCM 9628 / NBRC 100126 / VC-16).